The sequence spans 507 residues: Inositol-3-phosphate synthase (507 aa).

23 residues coordinate NAD(+): Gly-70, Gly-71, Asn-72, Asn-73, Asp-143, Ile-180, Gln-190, Arg-193, Thr-230, Ala-231, Asn-232, Thr-233, Gly-281, Ser-282, Asp-306, Ser-309, Asn-340, Asn-341, Asp-342, Lys-355, Ala-391, Asp-419, and Ser-420.

It belongs to the myo-inositol 1-phosphate synthase family. NAD(+) serves as cofactor.

It is found in the cytoplasm. It localises to the cytosol. Its subcellular location is the nucleus. The catalysed reaction is D-glucose 6-phosphate = 1D-myo-inositol 3-phosphate. The protein operates within polyol metabolism; myo-inositol biosynthesis; myo-inositol from D-glucose 6-phosphate: step 1/2. Its function is as follows. Key enzyme in myo-inositol biosynthesis pathway that catalyzes the conversion of glucose 6-phosphate to 1-myo-inositol 1-phosphate in a NAD-dependent manner. This Citrus paradisi (Grapefruit) protein is Inositol-3-phosphate synthase.